The sequence spans 203 residues: Outer-membrane lipoprotein LolB (203 aa).

An N-terminal signal peptide occupies residues 1–21 (MTGRWSPRLLAGLLAALVLSG). Residue Cys-22 is the site of N-palmitoyl cysteine attachment. Cys-22 carries the S-diacylglycerol cysteine lipid modification.

The protein belongs to the LolB family. As to quaternary structure, monomer.

The protein localises to the cell outer membrane. In terms of biological role, plays a critical role in the incorporation of lipoproteins in the outer membrane after they are released by the LolA protein. This chain is Outer-membrane lipoprotein LolB, found in Halorhodospira halophila (strain DSM 244 / SL1) (Ectothiorhodospira halophila (strain DSM 244 / SL1)).